A 110-amino-acid chain; its full sequence is Large ribosomal subunit protein uL22 (110 aa).

This sequence belongs to the universal ribosomal protein uL22 family. Part of the 50S ribosomal subunit.

In terms of biological role, this protein binds specifically to 23S rRNA; its binding is stimulated by other ribosomal proteins, e.g. L4, L17, and L20. It is important during the early stages of 50S assembly. It makes multiple contacts with different domains of the 23S rRNA in the assembled 50S subunit and ribosome. Its function is as follows. The globular domain of the protein is located near the polypeptide exit tunnel on the outside of the subunit, while an extended beta-hairpin is found that lines the wall of the exit tunnel in the center of the 70S ribosome. The sequence is that of Large ribosomal subunit protein uL22 from Stutzerimonas stutzeri (strain A1501) (Pseudomonas stutzeri).